The following is a 257-amino-acid chain: Nuclear receptor subfamily 0 group B member 2 (257 aa).

The region spanning 16 to 257 is the NR LBD domain; the sequence is SRPAILYALL…GLLGDMLLLR (242 aa). The residue at position 57 (Arg-57) is a Symmetric dimethylarginine; by PRMT5.

Belongs to the nuclear hormone receptor family. NR0 subfamily. Interacts (via N-terminus) with NEUROD1 (via N-terminus and C-terminus). Interacts with ID2. Interacts with RORG, NFIL3, NR1D1 and BHLHE41. Heterodimer; efficient DNA binding requires dimerization with another bHLH protein. Interacts with RARA, RXRA, THRB, NR5A1, NR5A2, NR1I3, PPARA, PPARG and EID1. Interacts with HNF4A; the resulting heterodimer is transcriptionally inactive. Interacts with DDX3X; this interaction disrupts the interaction between HNF4 and NR0B2/SHP that forms inactive heterodimers and enhances the formation of active HNF4 homodimers. Post-translationally, arginine methylation by PRMT5 enhances repression activity of metabolic genes in liver in response to bile acid signaling, by increasing interaction with cofactors. As to expression, liver. Low levels of expression were detected in heart and pancreas.

It is found in the nucleus. The protein resides in the cytoplasm. Transcriptional regulator that acts as a negative regulator of receptor-dependent signaling pathways. Specifically inhibits transactivation of the nuclear receptor with which it interacts. Inhibits transcriptional activity of NEUROD1 on E-box-containing promoter by interfering with the coactivation function of the p300/CBP-mediated transcription complex for NEUROD1. Essential component of the liver circadian clock which via its interaction with NR1D1 and RORG regulates NPAS2-mediated hepatic lipid metabolism. Regulates the circadian expression of cytochrome P450 (CYP) enzymes. Represses: NR5A2 and HNF4A to down-regulate CYP2C38, NFLI3 to up-regulate CYP2A5, BHLHE41/HNF1A axis to up-regulate CYP1A2, CYP2E1 and CYP3A11, and NR1D1 to up-regulate CYP2B10, CYP4A10 and CYP4A14. The polypeptide is Nuclear receptor subfamily 0 group B member 2 (NR0B2) (Homo sapiens (Human)).